The sequence spans 202 residues: Small ribosomal subunit protein uS4 (202 aa).

Over residues 1–13 the composition is skewed to basic residues; that stretch reads MSRYRGPRLRVTR. Residues 1-42 are disordered; that stretch reads MSRYRGPRLRVTRRLGELPGLTRKASKKSNPPGQHGQARRKR. The S4 RNA-binding domain maps to 90–152; it reads NRLDNVCFRL…KASKKLVEGN (63 aa).

It belongs to the universal ribosomal protein uS4 family. In terms of assembly, part of the 30S ribosomal subunit. Contacts protein S5. The interaction surface between S4 and S5 is involved in control of translational fidelity.

Its function is as follows. One of the primary rRNA binding proteins, it binds directly to 16S rRNA where it nucleates assembly of the body of the 30S subunit. With S5 and S12 plays an important role in translational accuracy. The sequence is that of Small ribosomal subunit protein uS4 from Prochlorococcus marinus (strain AS9601).